The primary structure comprises 126 residues: Large ribosomal subunit protein bL12 (126 aa).

Belongs to the bacterial ribosomal protein bL12 family. As to quaternary structure, homodimer. Part of the ribosomal stalk of the 50S ribosomal subunit. Forms a multimeric L10(L12)X complex, where L10 forms an elongated spine to which 2 to 4 L12 dimers bind in a sequential fashion. Binds GTP-bound translation factors.

Forms part of the ribosomal stalk which helps the ribosome interact with GTP-bound translation factors. Is thus essential for accurate translation. This Streptococcus pyogenes serotype M28 (strain MGAS6180) protein is Large ribosomal subunit protein bL12.